The sequence spans 203 residues: LexA repressor (203 aa).

The H-T-H motif DNA-binding region spans 28–48; that stretch reads VRELCDELGFKSPNTAHFHLK. Catalysis depends on for autocatalytic cleavage activity residues serine 122 and lysine 159.

The protein belongs to the peptidase S24 family. Homodimer.

The catalysed reaction is Hydrolysis of Ala-|-Gly bond in repressor LexA.. Its function is as follows. Represses a number of genes involved in the response to DNA damage (SOS response), including recA and lexA. In the presence of single-stranded DNA, RecA interacts with LexA causing an autocatalytic cleavage which disrupts the DNA-binding part of LexA, leading to derepression of the SOS regulon and eventually DNA repair. This Desulfatibacillum aliphaticivorans protein is LexA repressor.